Consider the following 423-residue polypeptide: Limonoid 21-O-acetyltransferse (423 aa).

Residues histidine 152 and aspartate 362 each act as proton acceptor in the active site.

Belongs to the plant acyltransferase family. In terms of assembly, monomer. As to expression, mainly expressed in petioles.

It carries out the reaction isomeliandiol + acetyl-CoA = 21-O-acetyl-isomeliandiol + CoA. The protein operates within secondary metabolite biosynthesis; terpenoid biosynthesis. Functionally, acetyltransferase involved in the biosynthesis of limonoids triterpene natural products such as azadirachtin, an antifeedant widely used as bioinsecticide, and possessing many medicinal applications including anti-tumoral, anti-malarial, anti-rheumatic, antibacterial, anti-inflammatory, anti-pyretic and diuretic effects. Catalyzes the formation of 21-O-acetyl-isomeliandiol from isomeliandiol. This is Limonoid 21-O-acetyltransferse from Melia azedarach (Chinaberry tree).